A 112-amino-acid chain; its full sequence is ATP synthase epsilon chain (112 aa).

Belongs to the ATPase epsilon chain family. F-type ATPases have 2 components, CF(1) - the catalytic core - and CF(0) - the membrane proton channel. CF(1) has five subunits: alpha(3), beta(3), gamma(1), delta(1), epsilon(1). CF(0) has three main subunits: a, b and c.

Its subcellular location is the cell membrane. Functionally, produces ATP from ADP in the presence of a proton gradient across the membrane. The protein is ATP synthase epsilon chain of Rickettsia africae (strain ESF-5).